Reading from the N-terminus, the 299-residue chain is Homeobox protein Nkx-2.5 (299 aa).

Residues 90–119 are compositionally biased toward basic and acidic residues; that stretch reads KDPKDHKKDICPLQKTLEHDKREAEDPERP. The disordered stretch occupies residues 90 to 128; the sequence is KDPKDHKKDICPLQKTLEHDKREAEDPERPRQRKRRKPR. The segment at residues 124–183 is a DNA-binding region (homeobox); sequence RRKPRVLFSQAQVYELERRFKQQKYLSAPERDHLANVLKLTSTQVKIWFQNRRYKCKRQR.

It belongs to the NK-2 homeobox family. As to quaternary structure, homodimer (via the homeobox); binds DNA as homodimer. Heart and gut tissue.

It localises to the nucleus. Functionally, transcription factor required for the development of the heart and the spleen. Implicated in commitment to and/or differentiation of the myocardial lineage. May regulate the expression of genes involved in cardiogenesis and play a role in the formation of gut and the pharyngeal region. Binds to the core DNA motif of promoter. This Xenopus laevis (African clawed frog) protein is Homeobox protein Nkx-2.5 (nkx-2.5).